We begin with the raw amino-acid sequence, 559 residues long: Germacrene A synthase 1 (559 aa).

5 residues coordinate Mg(2+): D312, D316, D456, T460, and E464. The DDXXD motif signature appears at 312 to 316 (DDTYD).

This sequence belongs to the terpene synthase family. In terms of assembly, monomer. Requires Mg(2+) as cofactor. Mainly expressed in sunflower trichomes.

The enzyme catalyses (2E,6E)-farnesyl diphosphate = (+)-(R)-germacrene A + diphosphate. It functions in the pathway secondary metabolite biosynthesis; terpenoid biosynthesis. Sesquiterpene synthase involved in germacrene A biosynthesis. Germacrene A is a precursor of several sesquiterpene lactones. This Helianthus annuus (Common sunflower) protein is Germacrene A synthase 1.